The following is a 611-amino-acid chain: uncharacterized protein (611 aa).

The protein belongs to the metallo-dependent hydrolases superfamily. N-acyl-D-amino-acid deacylase family.

This is an uncharacterized protein from Mycobacterium bovis (strain ATCC BAA-935 / AF2122/97).